We begin with the raw amino-acid sequence, 291 residues long: Homoserine kinase (291 aa).

An ATP-binding site is contributed by 79-89 (PLARGLGSSSA).

Belongs to the GHMP kinase family. Homoserine kinase subfamily.

It is found in the cytoplasm. It carries out the reaction L-homoserine + ATP = O-phospho-L-homoserine + ADP + H(+). The protein operates within amino-acid biosynthesis; L-threonine biosynthesis; L-threonine from L-aspartate: step 4/5. Catalyzes the ATP-dependent phosphorylation of L-homoserine to L-homoserine phosphate. This is Homoserine kinase from Leuconostoc citreum (strain KM20).